Reading from the N-terminus, the 446-residue chain is MREMITLESLCRALADEQIAAEELRERALDTEARLTLLNCFIREGDAVSQFGEADQARKGTSLWGVPVSFKDNICVRGLPLTAGTRGMSGFIADQDAAIVSQLKALGAVVAGKNNMHELSFGVTSINPHWGAVGNPVAPGYCAGGSSGGSAAAVASGIVPLSVGTDTGGSIRIPAAFCGITGFRPTTGRLSTAGIIPVSHTKDCVGLLTRTAGDAEFVYGLLSGKQQSFPLNRTGPCRIGLPVSMWSDLDGEVERACINALSLLRKTGFEFVEIDDADIVELNQTLTFTVPLYEFFADFAQSLLSLGWKHGIHHIFAQVDDANVKGIINHHLGEGAIKPAHYLSSLQNGELLKRKMDELFARHHIKLLGYPTVPCRVPHLDHADRPEFFSQAIRNTDLASNAMLPSITIPVGPEGRLPVGLSFDAPRARDAFLLSNVSLIEKVLKG.

Catalysis depends on charge relay system residues Lys-71 and Ser-146. Residue Ser-170 is the Acyl-ester intermediate of the active site.

The protein belongs to the amidase family.

It participates in plant hormone metabolism; auxin biosynthesis. Hydrolyzes indole-3-acetamide (IAM) into indole-3-acetic acid (IAA). The protein is Indoleacetamide hydrolase (iaaH) of Pseudomonas syringae pv. syringae.